The chain runs to 232 residues: 7-cyano-7-deazaguanine synthase (232 aa).

7 to 17 (CSGGLDSVSLA) serves as a coordination point for ATP. Zn(2+) is bound by residues cysteine 185, cysteine 193, cysteine 196, and cysteine 199.

Belongs to the QueC family. Requires Zn(2+) as cofactor.

The enzyme catalyses 7-carboxy-7-deazaguanine + NH4(+) + ATP = 7-cyano-7-deazaguanine + ADP + phosphate + H2O + H(+). It participates in purine metabolism; 7-cyano-7-deazaguanine biosynthesis. Its function is as follows. Catalyzes the ATP-dependent conversion of 7-carboxy-7-deazaguanine (CDG) to 7-cyano-7-deazaguanine (preQ(0)). The protein is 7-cyano-7-deazaguanine synthase of Brucella canis (strain ATCC 23365 / NCTC 10854 / RM-666).